The following is a 274-amino-acid chain: Formamidopyrimidine-DNA glycosylase (274 aa).

The active-site Schiff-base intermediate with DNA is the proline 2. Residue glutamate 3 is the Proton donor of the active site. The active-site Proton donor; for beta-elimination activity is the lysine 60. Histidine 93 and arginine 112 together coordinate DNA. The FPG-type zinc finger occupies 240–274; that stretch reads FVYGRKGEPCKRCGTPIEKTVVAGRGTHYCPRCQR. Arginine 264 functions as the Proton donor; for delta-elimination activity in the catalytic mechanism.

Belongs to the FPG family. Monomer. Requires Zn(2+) as cofactor.

The catalysed reaction is Hydrolysis of DNA containing ring-opened 7-methylguanine residues, releasing 2,6-diamino-4-hydroxy-5-(N-methyl)formamidopyrimidine.. It catalyses the reaction 2'-deoxyribonucleotide-(2'-deoxyribose 5'-phosphate)-2'-deoxyribonucleotide-DNA = a 3'-end 2'-deoxyribonucleotide-(2,3-dehydro-2,3-deoxyribose 5'-phosphate)-DNA + a 5'-end 5'-phospho-2'-deoxyribonucleoside-DNA + H(+). Functionally, involved in base excision repair of DNA damaged by oxidation or by mutagenic agents. Acts as a DNA glycosylase that recognizes and removes damaged bases. Has a preference for oxidized purines, such as 7,8-dihydro-8-oxoguanine (8-oxoG). Has AP (apurinic/apyrimidinic) lyase activity and introduces nicks in the DNA strand. Cleaves the DNA backbone by beta-delta elimination to generate a single-strand break at the site of the removed base with both 3'- and 5'-phosphates. This Geobacillus kaustophilus (strain HTA426) protein is Formamidopyrimidine-DNA glycosylase.